A 248-amino-acid chain; its full sequence is 1-(5-phosphoribosyl)-5-[(5-phosphoribosylamino)methylideneamino] imidazole-4-carboxamide isomerase (248 aa).

The active-site Proton acceptor is the aspartate 8. The active-site Proton donor is the aspartate 129.

Belongs to the HisA/HisF family.

Its subcellular location is the cytoplasm. The enzyme catalyses 1-(5-phospho-beta-D-ribosyl)-5-[(5-phospho-beta-D-ribosylamino)methylideneamino]imidazole-4-carboxamide = 5-[(5-phospho-1-deoxy-D-ribulos-1-ylimino)methylamino]-1-(5-phospho-beta-D-ribosyl)imidazole-4-carboxamide. Its pathway is amino-acid biosynthesis; L-histidine biosynthesis; L-histidine from 5-phospho-alpha-D-ribose 1-diphosphate: step 4/9. The sequence is that of 1-(5-phosphoribosyl)-5-[(5-phosphoribosylamino)methylideneamino] imidazole-4-carboxamide isomerase from Rhizobium johnstonii (strain DSM 114642 / LMG 32736 / 3841) (Rhizobium leguminosarum bv. viciae).